Here is a 478-residue protein sequence, read N- to C-terminus: Sulfate adenylyltransferase subunit 1 (478 aa).

In terms of domain architecture, tr-type G spans 28–244 (KTMLRFLTCG…LESVDVVNAS (217 aa)). The G1 stretch occupies residues 37-44 (GSVDDGKS). 37-44 (GSVDDGKS) is a binding site for GTP. Residues 95-99 (GITID) are G2. A G3 region spans residues 116 to 119 (DTPG). GTP-binding positions include 116–120 (DTPGH) and 171–174 (NKMD). The interval 171-174 (NKMD) is G4. A G5 region spans residues 209–211 (SAL).

This sequence belongs to the TRAFAC class translation factor GTPase superfamily. Classic translation factor GTPase family. CysN/NodQ subfamily. In terms of assembly, heterodimer composed of CysD, the smaller subunit, and CysN.

The catalysed reaction is sulfate + ATP + H(+) = adenosine 5'-phosphosulfate + diphosphate. The protein operates within sulfur metabolism; hydrogen sulfide biosynthesis; sulfite from sulfate: step 1/3. In terms of biological role, with CysD forms the ATP sulfurylase (ATPS) that catalyzes the adenylation of sulfate producing adenosine 5'-phosphosulfate (APS) and diphosphate, the first enzymatic step in sulfur assimilation pathway. APS synthesis involves the formation of a high-energy phosphoric-sulfuric acid anhydride bond driven by GTP hydrolysis by CysN coupled to ATP hydrolysis by CysD. This Yersinia enterocolitica serotype O:8 / biotype 1B (strain NCTC 13174 / 8081) protein is Sulfate adenylyltransferase subunit 1.